Reading from the N-terminus, the 422-residue chain is Kynurenine--oxoglutarate transaminase 1 (422 aa).

The substrate site is built by Gly36 and Asn185. Lys247 carries the N6-(pyridoxal phosphate)lysine modification. Arg398 contacts substrate.

The protein belongs to the class-I pyridoxal-phosphate-dependent aminotransferase family. Homodimer. Pyridoxal 5'-phosphate is required as a cofactor.

It localises to the cytoplasm. Its subcellular location is the cytosol. The catalysed reaction is L-kynurenine + 2-oxoglutarate = kynurenate + L-glutamate + H2O. It carries out the reaction 3-phenylpyruvate + L-glutamine = 2-oxoglutaramate + L-phenylalanine. It catalyses the reaction an S-substituted L-cysteine + H2O = a thiol + pyruvate + NH4(+). Its pathway is amino-acid degradation; L-kynurenine degradation; kynurenate from L-kynurenine: step 1/2. Inhibited by tryptophan, indole-3-pyruvic acid, 3-indolepropionic acid, DL-indole-3-lactic acid, indole-3-acetic acid (IAC), amino-oxyacetate (AOAA), aminooxy-phenylpropionic acid (AOPP) and Tris. Functionally, catalyzes the irreversible transamination of the L-tryptophan metabolite L-kynurenine to form kynurenic acid (KA), an intermediate in the tryptophan catabolic pathway which is also a broad spectrum antagonist of the three ionotropic excitatory amino acid receptors among others. Also metabolizes the cysteine conjugates of certain halogenated alkenes and alkanes to form reactive metabolites. Catalyzes the beta-elimination of S-conjugates and Se-conjugates of L-(seleno)cysteine, resulting in the cleavage of the C-S or C-Se bond. The polypeptide is Kynurenine--oxoglutarate transaminase 1 (Homo sapiens (Human)).